We begin with the raw amino-acid sequence, 253 residues long: MNRINQKLQEDKKILSIYFSAGYPNLNDTVQIIQDLEKSGVDMIEIGLPFSDPLADGPTIQESSTQALENGMTTKLLFEQLKNIRQTVQIPLIIMGYFNPILQYGVENFCKKCQETGIDGLIIPDLPVDIYAENYKETFEKHGLTNVFLITPQTSNERIRHIDSVSNGFIYLVSSASVTGSSSGFDNIQTNYFKRISEMNLKNPQIIGFGINNKETFNQATQYQKGAIIGSAFIKNLTENGVSSISKFVSEIF.

Active-site proton acceptor residues include glutamate 45 and aspartate 56.

This sequence belongs to the TrpA family. Tetramer of two alpha and two beta chains.

The catalysed reaction is (1S,2R)-1-C-(indol-3-yl)glycerol 3-phosphate + L-serine = D-glyceraldehyde 3-phosphate + L-tryptophan + H2O. The protein operates within amino-acid biosynthesis; L-tryptophan biosynthesis; L-tryptophan from chorismate: step 5/5. The alpha subunit is responsible for the aldol cleavage of indoleglycerol phosphate to indole and glyceraldehyde 3-phosphate. This chain is Tryptophan synthase alpha chain, found in Flavobacterium psychrophilum (strain ATCC 49511 / DSM 21280 / CIP 103535 / JIP02/86).